A 295-amino-acid chain; its full sequence is Probable protein phosphatase 2C 5 (295 aa).

The region spanning Q23–F294 is the PPM-type phosphatase domain. Mn(2+)-binding residues include D57 and G58. The tract at residues N151–E170 is disordered. Residues D237 and D285 each coordinate Mn(2+).

Belongs to the PP2C family. The cofactor is Mg(2+). Mn(2+) serves as cofactor.

It is found in the membrane. The enzyme catalyses O-phospho-L-seryl-[protein] + H2O = L-seryl-[protein] + phosphate. It catalyses the reaction O-phospho-L-threonyl-[protein] + H2O = L-threonyl-[protein] + phosphate. Its function is as follows. Enzyme with a broad specificity. The polypeptide is Probable protein phosphatase 2C 5 (Paramecium tetraurelia).